A 60-amino-acid polypeptide reads, in one-letter code: Large ribosomal subunit protein bL33 (60 aa).

It belongs to the bacterial ribosomal protein bL33 family.

The chain is Large ribosomal subunit protein bL33 from Christiangramia forsetii (strain DSM 17595 / CGMCC 1.15422 / KT0803) (Gramella forsetii).